Here is a 560-residue protein sequence, read N- to C-terminus: Nuclear hormone receptor family member nhr-8 (560 aa).

The interval 1–21 (MPSSSPSMDESRRSAVPPKEP) is disordered. The segment at residues 23–98 (GRICTVCSDR…VGMNSEWLND (76 aa)) is a DNA-binding region (nuclear receptor). NR C4-type zinc fingers lie at residues 26–46 (CTVCSDRANGYNFGVLTCESC) and 62–86 (CPFSDSCQITSASRKFCQACRLNKC). The 225-residue stretch at 336-560 (DEITLLEELH…PLIRELCSFE (225 aa)) folds into the NR LBD domain.

Belongs to the nuclear hormone receptor family.

Its subcellular location is the nucleus. Orphan nuclear receptor. The protein is Nuclear hormone receptor family member nhr-8 (nhr-8) of Caenorhabditis elegans.